The following is a 225-amino-acid chain: GrpE protein homolog 2, mitochondrial (225 aa).

The transit peptide at 1 to 32 (MAVRSLWACRLRVQRLLAWSAAWESKGWPLPF) directs the protein to the mitochondrion. N6-acetyllysine is present on Lys142.

Belongs to the GrpE family. As to quaternary structure, probable component of the PAM complex at least composed of a mitochondrial HSP70 protein, GRPEL1 or GRPEL2, TIMM44, TIMM16/PAM16 and TIMM14/DNAJC19.

The protein resides in the mitochondrion matrix. Functionally, essential component of the PAM complex, a complex required for the translocation of transit peptide-containing proteins from the inner membrane into the mitochondrial matrix in an ATP-dependent manner. Seems to control the nucleotide-dependent binding of mitochondrial HSP70 to substrate proteins. Stimulates ATPase activity of mt-HSP70. May also serve to modulate the interconversion of oligomeric (inactive) and monomeric (active) forms of mt-HSP70. In Pongo abelii (Sumatran orangutan), this protein is GrpE protein homolog 2, mitochondrial (GRPEL2).